The following is a 276-amino-acid chain: Putative hydro-lyase Xaut_1503 (276 aa).

Belongs to the D-glutamate cyclase family.

This Xanthobacter autotrophicus (strain ATCC BAA-1158 / Py2) protein is Putative hydro-lyase Xaut_1503.